The primary structure comprises 247 residues: 3-deoxy-manno-octulosonate cytidylyltransferase (247 aa).

The protein belongs to the KdsB family.

Its subcellular location is the cytoplasm. It catalyses the reaction 3-deoxy-alpha-D-manno-oct-2-ulosonate + CTP = CMP-3-deoxy-beta-D-manno-octulosonate + diphosphate. It participates in nucleotide-sugar biosynthesis; CMP-3-deoxy-D-manno-octulosonate biosynthesis; CMP-3-deoxy-D-manno-octulosonate from 3-deoxy-D-manno-octulosonate and CTP: step 1/1. The protein operates within bacterial outer membrane biogenesis; lipopolysaccharide biosynthesis. Functionally, activates KDO (a required 8-carbon sugar) for incorporation into bacterial lipopolysaccharide in Gram-negative bacteria. This is 3-deoxy-manno-octulosonate cytidylyltransferase from Leptospira interrogans serogroup Icterohaemorrhagiae serovar Lai (strain 56601).